The chain runs to 205 residues: Holliday junction branch migration complex subunit RuvA (205 aa).

A domain I region spans residues Met-1 to Asn-64. Positions Asp-65 to Val-143 are domain II. The interval Ser-144–Asn-156 is flexible linker. The domain III stretch occupies residues Arg-157–Leu-205.

Belongs to the RuvA family. As to quaternary structure, homotetramer. Forms an RuvA(8)-RuvB(12)-Holliday junction (HJ) complex. HJ DNA is sandwiched between 2 RuvA tetramers; dsDNA enters through RuvA and exits via RuvB. An RuvB hexamer assembles on each DNA strand where it exits the tetramer. Each RuvB hexamer is contacted by two RuvA subunits (via domain III) on 2 adjacent RuvB subunits; this complex drives branch migration. In the full resolvosome a probable DNA-RuvA(4)-RuvB(12)-RuvC(2) complex forms which resolves the HJ.

It is found in the cytoplasm. In terms of biological role, the RuvA-RuvB-RuvC complex processes Holliday junction (HJ) DNA during genetic recombination and DNA repair, while the RuvA-RuvB complex plays an important role in the rescue of blocked DNA replication forks via replication fork reversal (RFR). RuvA specifically binds to HJ cruciform DNA, conferring on it an open structure. The RuvB hexamer acts as an ATP-dependent pump, pulling dsDNA into and through the RuvAB complex. HJ branch migration allows RuvC to scan DNA until it finds its consensus sequence, where it cleaves and resolves the cruciform DNA. The protein is Holliday junction branch migration complex subunit RuvA of Pectobacterium atrosepticum (strain SCRI 1043 / ATCC BAA-672) (Erwinia carotovora subsp. atroseptica).